We begin with the raw amino-acid sequence, 155 residues long: Ubiquitin-conjugating enzyme E2 14 (155 aa).

The 148-residue stretch at 7 to 154 (SSSRRLTKEY…ARDYVEQFAK (148 aa)) folds into the UBC core domain. Cys-91 acts as the Glycyl thioester intermediate in catalysis.

Belongs to the ubiquitin-conjugating enzyme family.

It carries out the reaction S-ubiquitinyl-[E1 ubiquitin-activating enzyme]-L-cysteine + [E2 ubiquitin-conjugating enzyme]-L-cysteine = [E1 ubiquitin-activating enzyme]-L-cysteine + S-ubiquitinyl-[E2 ubiquitin-conjugating enzyme]-L-cysteine.. Its pathway is protein modification; protein ubiquitination. In terms of biological role, catalyzes the covalent attachment of ubiquitin to other proteins. Mediates the selective degradation of short-lived and abnormal proteins. This is Ubiquitin-conjugating enzyme E2 14 (ubc14) from Schizosaccharomyces pombe (strain 972 / ATCC 24843) (Fission yeast).